Reading from the N-terminus, the 298-residue chain is Glutamyl-Q tRNA(Asp) synthetase (298 aa).

L-glutamate is bound by residues Arg-9–Ser-13 and Glu-45. Residues Pro-12 to Ser-22 carry the 'HIGH' region motif. Residues Cys-101, Cys-103, Tyr-115, and Cys-119 each coordinate Zn(2+). L-glutamate contacts are provided by Tyr-172 and Arg-190. The short motif at Lys-228–Gln-232 is the 'KMSKS' region element. Lys-231 contributes to the ATP binding site.

Belongs to the class-I aminoacyl-tRNA synthetase family. GluQ subfamily. It depends on Zn(2+) as a cofactor.

Its function is as follows. Catalyzes the tRNA-independent activation of glutamate in presence of ATP and the subsequent transfer of glutamate onto a tRNA(Asp). Glutamate is transferred on the 2-amino-5-(4,5-dihydroxy-2-cyclopenten-1-yl) moiety of the queuosine in the wobble position of the QUC anticodon. The protein is Glutamyl-Q tRNA(Asp) synthetase of Salmonella choleraesuis (strain SC-B67).